Consider the following 179-residue polypeptide: Translation initiation factor IF-3 (179 aa).

It belongs to the IF-3 family. As to quaternary structure, monomer.

The protein localises to the cytoplasm. IF-3 binds to the 30S ribosomal subunit and shifts the equilibrium between 70S ribosomes and their 50S and 30S subunits in favor of the free subunits, thus enhancing the availability of 30S subunits on which protein synthesis initiation begins. This Buchnera aphidicola subsp. Schizaphis graminum (strain Sg) protein is Translation initiation factor IF-3.